A 298-amino-acid polypeptide reads, in one-letter code: Phosphatidylserine decarboxylase proenzyme (298 aa).

Residues aspartate 113, histidine 169, and serine 256 each act as charge relay system; for autoendoproteolytic cleavage activity in the active site. Residue serine 256 is the Schiff-base intermediate with substrate; via pyruvic acid; for decarboxylase activity of the active site. A Pyruvic acid (Ser); by autocatalysis modification is found at serine 256.

This sequence belongs to the phosphatidylserine decarboxylase family. PSD-B subfamily. Prokaryotic type II sub-subfamily. In terms of assembly, heterodimer of a large membrane-associated beta subunit and a small pyruvoyl-containing alpha subunit. The cofactor is pyruvate. Post-translationally, is synthesized initially as an inactive proenzyme. Formation of the active enzyme involves a self-maturation process in which the active site pyruvoyl group is generated from an internal serine residue via an autocatalytic post-translational modification. Two non-identical subunits are generated from the proenzyme in this reaction, and the pyruvate is formed at the N-terminus of the alpha chain, which is derived from the carboxyl end of the proenzyme. The autoendoproteolytic cleavage occurs by a canonical serine protease mechanism, in which the side chain hydroxyl group of the serine supplies its oxygen atom to form the C-terminus of the beta chain, while the remainder of the serine residue undergoes an oxidative deamination to produce ammonia and the pyruvoyl prosthetic group on the alpha chain. During this reaction, the Ser that is part of the protease active site of the proenzyme becomes the pyruvoyl prosthetic group, which constitutes an essential element of the active site of the mature decarboxylase.

It is found in the cell membrane. It catalyses the reaction a 1,2-diacyl-sn-glycero-3-phospho-L-serine + H(+) = a 1,2-diacyl-sn-glycero-3-phosphoethanolamine + CO2. It participates in phospholipid metabolism; phosphatidylethanolamine biosynthesis; phosphatidylethanolamine from CDP-diacylglycerol: step 2/2. Its function is as follows. Catalyzes the formation of phosphatidylethanolamine (PtdEtn) from phosphatidylserine (PtdSer). In Desulfitobacterium hafniense (strain Y51), this protein is Phosphatidylserine decarboxylase proenzyme.